Reading from the N-terminus, the 161-residue chain is Anther-specific protein LAT52 (161 aa).

Residues 1-17 form the signal peptide; it reads MAKAIVLLSALCILALA. Cystine bridges form between Cys35–Cys106, Cys38–Cys147, and Cys59–Cys94. Asn61 carries an N-linked (GlcNAc...) asparagine glycan.

It belongs to the Ole e I family. As to expression, expressed in anthers and pollen.

Functionally, may play a role during germination or early tube growth. In Solanum lycopersicum (Tomato), this protein is Anther-specific protein LAT52 (LAT52).